We begin with the raw amino-acid sequence, 411 residues long: Adherens junction-associated protein 1 (411 aa).

The signal sequence occupies residues methionine 1 to alanine 43. The Extracellular segment spans residues leucine 44 to glutamine 282. Disordered stretches follow at residues isoleucine 89 to alanine 108, alanine 115 to phenylalanine 197, and serine 239 to proline 268. The span at alanine 115–proline 146 shows a compositional bias: low complexity. The span at serine 166–threonine 178 shows a compositional bias: polar residues. Residues proline 247–glycine 263 show a composition bias toward low complexity. A helical membrane pass occupies residues isoleucine 283 to leucine 303. Positions leucine 303 to cysteine 411 are targeting signals. Topologically, residues lysine 304–cysteine 411 are cytoplasmic. The interval glycine 311–glutamine 330 is disordered.

In terms of assembly, forms a complex with CDH1 and CTNNB1; interacts directly with CTNNB1. Interacts with AP1M2. Interacts with isoform 2 of BSG/CD147. In terms of processing, thr-237 and Ser-239 may be phosphorylated; however as this position is probably extracellular, the in vivo relevance is not proven. Expressed in uterus and pancreas (at protein level).

The protein resides in the basolateral cell membrane. It is found in the apical cell membrane. The protein localises to the cell junction. It localises to the adherens junction. Plays a role in cell adhesion and cell migration. This Homo sapiens (Human) protein is Adherens junction-associated protein 1 (AJAP1).